A 280-amino-acid chain; its full sequence is MFFRAYAKINISLDVVGKREDDYHLLEMIMQRIELYDILEVTKNKTGINIKCNKSYVPLDERNLVYKAAKLFLDTYNLKGGVDFNIIKNIPVSAGLAGGSSDAATTLLAMRELYNIDVSDDELCKLGLKIGADVPYCIKGGTALCEGIGEKVTNLKGFKGHILVLVKPKFGVSTKEVYKSLDINKIYRHPNTEGLIKAVENNDLRYVSENMRNVLENVTLKKHTIIKEIKEKMIRSGALGSMMSGSGPSVFGFFDDMLKAQRCYEYFKSKYNDVYITRTI.

The active site involves Lys-8. 91 to 101 contributes to the ATP binding site; sequence PVSAGLAGGSS. Asp-133 is a catalytic residue.

The protein belongs to the GHMP kinase family. IspE subfamily.

The enzyme catalyses 4-CDP-2-C-methyl-D-erythritol + ATP = 4-CDP-2-C-methyl-D-erythritol 2-phosphate + ADP + H(+). The protein operates within isoprenoid biosynthesis; isopentenyl diphosphate biosynthesis via DXP pathway; isopentenyl diphosphate from 1-deoxy-D-xylulose 5-phosphate: step 3/6. Its function is as follows. Catalyzes the phosphorylation of the position 2 hydroxy group of 4-diphosphocytidyl-2C-methyl-D-erythritol. The protein is 4-diphosphocytidyl-2-C-methyl-D-erythritol kinase of Clostridium novyi (strain NT).